Here is an 848-residue protein sequence, read N- to C-terminus: Adenylate cyclase (848 aa).

The interval 1 to 535 is catalytic; sequence MYLYIETLKQ…DVSHHFPLRL (535 aa). Positions 541 to 848 are regulatory; sequence KALYSPCEIR…DTPLLQQYFS (308 aa). A Phosphohistidine; by CRR modification is found at His-609.

This sequence belongs to the adenylyl cyclase class-1 family.

It is found in the cytoplasm. The enzyme catalyses ATP = 3',5'-cyclic AMP + diphosphate. This is Adenylate cyclase (cyaA) from Escherichia coli O157:H7.